Here is a 280-residue protein sequence, read N- to C-terminus: F420-dependent methylenetetrahydromethanopterin dehydrogenase (280 aa).

The protein belongs to the MTD family.

The enzyme catalyses 5,10-methylenetetrahydromethanopterin + oxidized coenzyme F420-(gamma-L-Glu)(n) + 2 H(+) = 5,10-methenyl-5,6,7,8-tetrahydromethanopterin + reduced coenzyme F420-(gamma-L-Glu)(n). Its pathway is one-carbon metabolism; methanogenesis from CO(2); 5,10-methylene-5,6,7,8-tetrahydromethanopterin from 5,10-methenyl-5,6,7,8-tetrahydromethanopterin (coenzyme F420 route): step 1/1. Catalyzes the reversible reduction of methenyl-H(4)MPT(+) to methylene-H(4)MPT. The polypeptide is F420-dependent methylenetetrahydromethanopterin dehydrogenase (Methanospirillum hungatei JF-1 (strain ATCC 27890 / DSM 864 / NBRC 100397 / JF-1)).